A 317-amino-acid chain; its full sequence is Iron-uptake system-binding protein (317 aa).

Positions 1–19 are cleaved as a signal peptide; it reads MKKISLTLLILLLALTAAA. A lipid anchor (N-palmitoyl cysteine) is attached at C20. C20 carries the S-diacylglycerol cysteine lipid modification. The Fe/B12 periplasmic-binding domain occupies 57-317; it reads IAITGSVESM…KAAAEKLTQN (261 aa).

The protein belongs to the bacterial solute-binding protein 8 family. The complex is composed of one ATP-binding protein (YusV), two transmembrane proteins (FeuB and FeuC) and a solute-binding protein (FeuA).

The protein localises to the cell membrane. Its subcellular location is the cytoplasm. The protein resides in the membrane raft. Involved in the uptake of iron. In terms of biological role, part of the ABC transporter complex FeuABC/YusV involved in import of the catecholate siderophores bacillibactin and enterobactin. This is Iron-uptake system-binding protein (feuA) from Bacillus subtilis (strain 168).